The primary structure comprises 78 residues: U-scoloptoxin(04)-Er1b (78 aa).

The N-terminal stretch at 1-24 is a signal peptide; that stretch reads MTRHLIFAAVLLVCLFVCWNAVGA. The propeptide occupies 25–28; the sequence is QDAR.

The protein belongs to the scoloptoxin-04 family. In terms of processing, contains 2 disulfide bonds. Expressed by the venom gland.

It is found in the secreted. In Ethmostigmus rubripes (Giant centipede), this protein is U-scoloptoxin(04)-Er1b.